Here is a 340-residue protein sequence, read N- to C-terminus: Protein-arginine kinase (340 aa).

A Phosphagen kinase C-terminal domain is found at 14 to 244 (IVITTRIRLA…EQIINQENLS (231 aa)). ATP-binding positions include 17-21 (TTRIR), H81, R115, 166-170 (RASVM), and 197-202 (RGLWGE).

This sequence belongs to the ATP:guanido phosphotransferase family.

It catalyses the reaction L-arginyl-[protein] + ATP = N(omega)-phospho-L-arginyl-[protein] + ADP + H(+). In terms of biological role, catalyzes the specific phosphorylation of arginine residues in proteins. This Clostridium acetobutylicum (strain ATCC 824 / DSM 792 / JCM 1419 / IAM 19013 / LMG 5710 / NBRC 13948 / NRRL B-527 / VKM B-1787 / 2291 / W) protein is Protein-arginine kinase.